The chain runs to 437 residues: Ribosomal protein uS12 methylthiotransferase RimO (437 aa).

Positions 9–125 constitute an MTTase N-terminal domain; that stretch reads PAIFLLSLGC…VLAAIGAHYC (117 aa). [4Fe-4S] cluster-binding residues include cysteine 18, cysteine 54, cysteine 88, cysteine 149, cysteine 153, and cysteine 156. The Radical SAM core domain occupies 135–364; sequence LTPPHYAFLK…MELQESIAAS (230 aa). The TRAM domain occupies 367-434; that stretch reads RKLEGQTLTV…AYELFGRVGS (68 aa).

It belongs to the methylthiotransferase family. RimO subfamily. Requires [4Fe-4S] cluster as cofactor.

The protein resides in the cytoplasm. It catalyses the reaction L-aspartate(89)-[ribosomal protein uS12]-hydrogen + (sulfur carrier)-SH + AH2 + 2 S-adenosyl-L-methionine = 3-methylsulfanyl-L-aspartate(89)-[ribosomal protein uS12]-hydrogen + (sulfur carrier)-H + 5'-deoxyadenosine + L-methionine + A + S-adenosyl-L-homocysteine + 2 H(+). Functionally, catalyzes the methylthiolation of an aspartic acid residue of ribosomal protein uS12. The sequence is that of Ribosomal protein uS12 methylthiotransferase RimO from Chlorobaculum parvum (strain DSM 263 / NCIMB 8327) (Chlorobium vibrioforme subsp. thiosulfatophilum).